A 160-amino-acid polypeptide reads, in one-letter code: Cytochrome b6-f complex subunit 4 (160 aa).

Transmembrane regions (helical) follow at residues 36-56 (LLYI…GLAV), 95-115 (LLGV…PFLE), and 131-151 (TVFL…TLPI).

Belongs to the cytochrome b family. PetD subfamily. As to quaternary structure, the 4 large subunits of the cytochrome b6-f complex are cytochrome b6, subunit IV (17 kDa polypeptide, petD), cytochrome f and the Rieske protein, while the 4 small subunits are petG, petL, petM and petN. The complex functions as a dimer.

It localises to the plastid. The protein localises to the chloroplast thylakoid membrane. Functionally, component of the cytochrome b6-f complex, which mediates electron transfer between photosystem II (PSII) and photosystem I (PSI), cyclic electron flow around PSI, and state transitions. The sequence is that of Cytochrome b6-f complex subunit 4 from Lotus japonicus (Lotus corniculatus var. japonicus).